The following is a 410-amino-acid chain: MKEEIIERFTTYVKVDTQSDESVDTCPSTPGQLTLGNMLVDELKSIGMQDAAIDENGYVMATLPSNTEKDVPTIGFLAHVDTATDFTGKNVNPQIIESYDGKDIVLNEQLQVTLSPDQFPELSGYKGHTLITTDGTTLLGADNKAGIAEIMTAMDYLIKHPEIKHGTIRVAFTPDEEIGRGPHKFDVKRFNASFAYTVDGGPLGELEYESFNAAAAKITIKGNNVHPGTAKGKMINSAKIAMKLNSLLPADEAPEYTEGYEGFYHLLSIQGDVEETKLHYIIRDFDKENFQNRKETMKRAVEELQNEYGQDRILLDMNDQYYNMREKIEPVIEIVNIAKQAMENLGIEPKISPIRGGTDGSQLSYMGLPTPNIFTGGENFHGKFEYISVDNMVKAVNVIVEIAKQFEAQA.

His79 contacts Zn(2+). Residue Asp81 is part of the active site. Asp142 provides a ligand contact to Zn(2+). Catalysis depends on Glu176, which acts as the Proton acceptor. Residues Glu177, Asp199, and His381 each contribute to the Zn(2+) site.

Belongs to the peptidase M20B family. Zn(2+) serves as cofactor.

It is found in the cytoplasm. The enzyme catalyses Release of the N-terminal residue from a tripeptide.. Functionally, cleaves the N-terminal amino acid of tripeptides. The protein is Peptidase T (pepT) of Bacillus subtilis (strain 168).